A 146-amino-acid chain; its full sequence is Large ribosomal subunit protein uL15 (146 aa).

The disordered stretch occupies residues 1–46; it reads MKLHELQPAPGSRKKAVRVGRGIGSGNGKTAGRGHKGQKARSGGGV. Over residues 21–31 the composition is skewed to gly residues; the sequence is RGIGSGNGKTA.

This sequence belongs to the universal ribosomal protein uL15 family. As to quaternary structure, part of the 50S ribosomal subunit.

Functionally, binds to the 23S rRNA. The protein is Large ribosomal subunit protein uL15 of Geobacillus thermodenitrificans (strain NG80-2).